The primary structure comprises 3503 residues: Protein dachsous (3503 aa).

An N-terminal signal peptide occupies residues 1–20 (MLRSSLLILLAIVLLGSSQA). Residues 21 to 3045 (ASHDQERERK…SSSGSIGDWA (3025 aa)) are Extracellular-facing. 14 consecutive Cadherin domains span residues 22–121 (SHDQ…APTF), 122–233 (PQTS…QPIF), 234–340 (NQSR…QPTI), 345–451 (LSDD…PPEF), 452–558 (EQDL…EPIF), 559–662 (DQSF…RPVF), 663–774 (YPRE…PPIF), 775–878 (EKAR…APEF), 879–983 (EASM…PPVF), 984–1100 (EKDE…DPKF), 1101–1203 (QKSK…APEI), 1205–1312 (DPQE…RPTF), 1313–1432 (TSSS…APEW), and 1433–1549 (PQDP…APHF). 2 N-linked (GlcNAc...) asparagine glycosylation sites follow: asparagine 220 and asparagine 234. Serine 236 bears the Phosphoserine mark. 3 N-linked (GlcNAc...) asparagine glycosylation sites follow: asparagine 245, asparagine 381, and asparagine 416. 3 N-linked (GlcNAc...) asparagine glycosylation sites follow: asparagine 564, asparagine 594, and asparagine 743. Asparagine 966, asparagine 991, asparagine 1006, asparagine 1029, asparagine 1143, and asparagine 1236 each carry an N-linked (GlcNAc...) asparagine glycan. Residues asparagine 1453, asparagine 1479, asparagine 1524, and asparagine 1553 are each glycosylated (N-linked (GlcNAc...) asparagine). Cadherin domains follow at residues 1556–1666 (GGKT…PPRF), 1667–1794 (LQAV…SPEF), 1796–1899 (PGSC…APRF), 1900–2004 (KLSK…RPIF), 2005–2111 (ERYP…TPVL), 2114–2269 (QNET…SPKF), 2270–2375 (SQKQ…QPTF), 2375–2479 (FPPN…APVF), 2489–2595 (AILP…RSQF), 2596–2699 (LQNQ…FPIF), 2701–2809 (RSAK…EPKF), 2810–2916 (PLTE…TPQF), and 2919–3028 (RTYR…HPGT). N-linked (GlcNAc...) asparagine glycosylation is found at asparagine 1700, asparagine 1884, and asparagine 1940. Asparagine 2115 is a glycosylation site (N-linked (GlcNAc...) asparagine). The tract at residues 2193-2225 (GRALHYEEEIDESSEEDPNNSTRSQRALTSSSF) is disordered. A compositionally biased stretch (acidic residues) spans 2200–2210 (EEIDESSEEDP). Residues asparagine 2211 and asparagine 2212 are each glycosylated (N-linked (GlcNAc...) asparagine). Positions 2211–2225 (NNSTRSQRALTSSSF) are enriched in polar residues. N-linked (GlcNAc...) asparagine glycans are attached at residues asparagine 2421, asparagine 2511, asparagine 2520, asparagine 2547, asparagine 2588, and asparagine 2678. N-linked (GlcNAc...) asparagine glycosylation is found at asparagine 2845 and asparagine 2967. Residues 3046 to 3066 (IGLLVAFLLVLCAAAGIFLFI) traverse the membrane as a helical segment. Over 3067–3503 (HMRSRKPRNA…SQRGNVGTRM (437 aa)) the chain is Cytoplasmic. 3 disordered regions span residues 3114–3195 (AGAA…GRIS), 3360–3404 (LSEH…IPPP), and 3431–3503 (LPRS…GTRM). Low complexity-rich tracts occupy residues 3133 to 3159 (GAHA…SGRG) and 3363 to 3372 (HSGSGASSSA). A compositionally biased stretch (pro residues) spans 3391–3404 (KPPPSAPPTHIPPP). Positions 3440 to 3463 (ASGSFSTSSAMSPSFSPSLSPLAT) are enriched in low complexity. Serine 3465 and serine 3469 each carry phosphoserine. A compositionally biased stretch (polar residues) spans 3492-3503 (QPSQRGNVGTRM).

As to quaternary structure, interacts (via cytoplasmic region) with Myo31DF. Post-translationally, phosphorylated by fj on Ser/Thr of cadherin domains. Expressed in embryonic ectoderm. In larvae, expression is restricted to imaginal disks and brain.

It is found in the cell membrane. The protein resides in the cell junction. Its function is as follows. Required for normal morphogenesis of adult structures derived from imaginal disks. Plays a role in planar cell polarity and in determining body left-right asymmetry. Expression in segment H1 of the imaginal ring and interaction with Myo31DF are required to induce changes of cell shape and orientation in segment H2, which then gives rise to normal, dextral looping of the adult hindgut. The sequence is that of Protein dachsous (ds) from Drosophila melanogaster (Fruit fly).